A 446-amino-acid chain; its full sequence is UDP-N-acetylmuramate--L-alanine ligase (446 aa).

ATP is bound at residue 122-128 (GTHGKTT).

It belongs to the MurCDEF family.

The protein resides in the cytoplasm. It carries out the reaction UDP-N-acetyl-alpha-D-muramate + L-alanine + ATP = UDP-N-acetyl-alpha-D-muramoyl-L-alanine + ADP + phosphate + H(+). It participates in cell wall biogenesis; peptidoglycan biosynthesis. In terms of biological role, cell wall formation. In Nocardioides sp. (strain ATCC BAA-499 / JS614), this protein is UDP-N-acetylmuramate--L-alanine ligase.